Reading from the N-terminus, the 901-residue chain is Serine/threonine-protein kinase-like protein CR4 (901 aa).

A signal peptide spans 1 to 22 (MDIVPVVALCCCLVLLPSWAYG). 7 tandem repeats follow at residues 31–66 (VSYG…GAPS), 70–105 (FVGV…GVPQ), 123–158 (LCAL…TVTG), 160–193 (VSAI…GVIG), 201–234 (FQSI…QMST), 251–285 (MVSV…TLAP), and 290–328 (VYAI…AVSP). The interval 31–328 (VSYGEDGPVF…PLALPMAVSP (298 aa)) is 7 X 36 AA repeats. Asn-149 and Asn-177 each carry an N-linked (GlcNAc...) asparagine glycan. N-linked (GlcNAc...) asparagine glycosylation occurs at Asn-280. Residues 335 to 389 (SCSHGYYEYANHGEVGSGSKTCKPANSRLCLPCSVGCPDDSYESSPCNATADRVC) form a TNFR-Cys repeat. Cystine bridges form between Cys-336-Cys-364, Cys-367-Cys-381, and Cys-371-Cys-389. A glycan (N-linked (GlcNAc...) asparagine) is linked at Asn-382. The chain crosses the membrane as a helical span at residues 423-443 (IFVAEIAFAVILVFSVTAIAC). The Protein kinase domain occupies 504–781 (FSEDSQVGKG…KVTTALERAL (278 aa)). ATP contacts are provided by residues 510–518 (VGKGSFSCV) and Lys-532. The active-site Proton acceptor is Asp-633. The tract at residues 845–901 (VTSSQRRKSSASEADMDGRTTTDGRNVGSSIGDGLRSLEEEISPASPQENLYLQHNF) is disordered. Over residues 889-901 (ASPQENLYLQHNF) the composition is skewed to polar residues.

Belongs to the protein kinase superfamily. Ser/Thr protein kinase family. As to quaternary structure, homodimer. Autophosphorylated. Specifically expressed in the epidermal cells of paleas and lemmas.

It localises to the cell membrane. Its subcellular location is the endosome. The protein localises to the multivesicular body membrane. It carries out the reaction L-seryl-[protein] + ATP = O-phospho-L-seryl-[protein] + ADP + H(+). It catalyses the reaction L-threonyl-[protein] + ATP = O-phospho-L-threonyl-[protein] + ADP + H(+). In terms of biological role, receptor protein kinase. Could play a role in a differentiation signal. Controls formative cell division in meristems. Regulates epidermal cell differentiation in many organs. During floral organogenesis, required to maintain the interlocking of the palea and lemma, and fertility. Triggers culm elongation. The sequence is that of Serine/threonine-protein kinase-like protein CR4 from Oryza sativa subsp. japonica (Rice).